The primary structure comprises 128 residues: Ribosome-binding factor A (128 aa).

The protein belongs to the RbfA family. As to quaternary structure, monomer. Binds 30S ribosomal subunits, but not 50S ribosomal subunits or 70S ribosomes.

Its subcellular location is the cytoplasm. In terms of biological role, one of several proteins that assist in the late maturation steps of the functional core of the 30S ribosomal subunit. Associates with free 30S ribosomal subunits (but not with 30S subunits that are part of 70S ribosomes or polysomes). Required for efficient processing of 16S rRNA. May interact with the 5'-terminal helix region of 16S rRNA. The polypeptide is Ribosome-binding factor A (Idiomarina loihiensis (strain ATCC BAA-735 / DSM 15497 / L2-TR)).